The primary structure comprises 394 residues: Cytochrome b561 and DOMON domain-containing protein At4g12980 (394 aa).

The N-terminal stretch at 1–24 (MDSSYLRISLSFLFWALLLSPAVS) is a signal peptide. Residues 49-169 (LKAILHYSYD…GKVNQVWQVG (121 aa)) enclose the DOMON domain. One can recognise a Cytochrome b561 domain in the interval 184–381 (GPNLNSVGSL…LEVVTWVIVL (198 aa)). Helical transmembrane passes span 220 to 240 (IHGI…AMIA) and 252 to 272 (AWFY…VAGW). Positions 221, 257, and 290 each coordinate heme b. The chain crosses the membrane as a helical span at residues 292–312 (NIGICLFSIATLQMFAMLLRP). H326 lines the heme b pocket. Transmembrane regions (helical) follow at residues 328–348 (GVGY…LSIL) and 361–381 (VIGT…VIVL).

It depends on heme b as a cofactor.

It is found in the membrane. May act as a catecholamine-responsive trans-membrane electron transporter. This chain is Cytochrome b561 and DOMON domain-containing protein At4g12980, found in Arabidopsis thaliana (Mouse-ear cress).